The following is a 196-amino-acid chain: HTH-type transcriptional regulator BetI (196 aa).

The region spanning 8–68 (PIRRSQLIAA…ATMRHLMQAL (61 aa)) is the HTH tetR-type domain. A DNA-binding region (H-T-H motif) is located at residues 31-50 (SIAYIARLAGVSNGIISHYF).

Its pathway is amine and polyamine biosynthesis; betaine biosynthesis via choline pathway [regulation]. Functionally, repressor involved in the biosynthesis of the osmoprotectant glycine betaine. It represses transcription of the choline transporter BetT and the genes of BetAB involved in the synthesis of glycine betaine. This is HTH-type transcriptional regulator BetI from Ectopseudomonas mendocina (strain ymp) (Pseudomonas mendocina).